The following is a 931-amino-acid chain: Semaphorin-6C (931 aa).

The first 25 residues, 1 to 25 (MPRAPHSMPLLLLLLLLSSLPQAQA), serve as a signal peptide directing secretion. The Extracellular segment spans residues 26–605 (AFPQDPTPLL…ASASRSIPIP (580 aa)). The Sema domain maps to 31–517 (PTPLLTSDLQ…FPGCIVYLSL (487 aa)). N-linked (GlcNAc...) asparagine glycosylation is present at N71. 4 disulfide bridges follow: C112–C122, C140–C149, C263–C374, and C288–C333. N287 carries N-linked (GlcNAc...) asparagine glycosylation. N438 is a glycosylation site (N-linked (GlcNAc...) asparagine). 4 cysteine pairs are disulfide-bonded: C480–C511, C520–C538, C526–C571, and C530–C546. Residues 556–591 (DVDLTGNQESTEHGDCQDGATGSQSGPGDSAYGVRR) form a disordered region. A helical membrane pass occupies residues 606–626 (LLLACVAAAFALGASVSGLLV). Residues 627-931 (SCACRRANRR…PAPHGGHFNF (305 aa)) lie on the Cytoplasmic side of the membrane. Disordered regions lie at residues 655 to 747 (LARL…GGPA) and 777 to 931 (HGPQ…HFNF). Over residues 693 to 708 (PPELACLPTPETTPEL) the composition is skewed to low complexity. Residues 893–906 (PEGHRGRSLKRVDV) show a composition bias toward basic and acidic residues. Residues 911 to 923 (SPKPPLASPPQPA) are compositionally biased toward pro residues.

Belongs to the semaphorin family.

The protein localises to the cell membrane. In terms of biological role, may be a stop signal for the dorsal root ganglion neurons in their target areas, and possibly also for other neurons. May also be involved in the maintenance and remodeling of neuronal connections. This Mus musculus (Mouse) protein is Semaphorin-6C (Sema6c).